Reading from the N-terminus, the 203-residue chain is Protein-methionine-sulfoxide reductase heme-binding subunit MsrQ (203 aa).

6 helical membrane-spanning segments follow: residues 10–30, 37–57, 75–95, 110–130, 147–167, and 169–189; these read IFVLGCLFPLWWFYEAAMGLL, IMMDRLGLGALVFLLITLSMT, LGLWCFAYIVLHLVSYLVFIL, PYIIVGALGFLGLLALAVTSN, LVYVILGLGLLHFLWIVRSDL, and EWAIYAGIGGVLLVMRIPPVW.

It belongs to the MsrQ family. In terms of assembly, heterodimer of a catalytic subunit (MsrP) and a heme-binding subunit (MsrQ). FMN serves as cofactor. It depends on heme b as a cofactor.

It is found in the cell inner membrane. In terms of biological role, part of the MsrPQ system that repairs oxidized periplasmic proteins containing methionine sulfoxide residues (Met-O), using respiratory chain electrons. Thus protects these proteins from oxidative-stress damage caused by reactive species of oxygen and chlorine generated by the host defense mechanisms. MsrPQ is essential for the maintenance of envelope integrity under bleach stress, rescuing a wide series of structurally unrelated periplasmic proteins from methionine oxidation. MsrQ provides electrons for reduction to the reductase catalytic subunit MsrP, using the quinone pool of the respiratory chain. This is Protein-methionine-sulfoxide reductase heme-binding subunit MsrQ from Pseudomonas entomophila (strain L48).